We begin with the raw amino-acid sequence, 402 residues long: LIM/homeobox protein Lhx5 (402 aa).

LIM zinc-binding domains follow at residues 3 to 61 (VHCA…RRFG) and 62 to 125 (TKCA…SSSL). Positions 124–135 (SLKEGSLNSVSS) are enriched in low complexity. Disordered regions lie at residues 124-186 (SLKE…PRTT) and 298-402 (HGPP…AAVW). Residues 151 to 167 (DDPKETDNSTSSDKETA) show a composition bias toward basic and acidic residues. A DNA-binding region (homeobox) is located at residues 180–239 (RRGPRTTIKAKQLETLKAAFAATPKPTRHIREQLAQETGLNMRVIQVWFQNRRSKERRMK). Low complexity-rich tracts occupy residues 300 to 311 (PPSQAQSPADSS) and 322 to 336 (PLGA…PHAA).

As to expression, expressed in fetal brain and in various regions of the adult central nervous system including the spinal cord, the thalamus, and the cerebellum.

It localises to the nucleus. In terms of biological role, plays an essential role in the regulation of neuronal differentiation and migration during development of the central nervous system. The protein is LIM/homeobox protein Lhx5 (LHX5) of Homo sapiens (Human).